The sequence spans 147 residues: Allograft inflammatory factor 1 (147 aa).

Position 2 is an N-acetylserine (serine 2). The residue at position 11 (lysine 11) is an N6-acetyllysine. At serine 39 the chain carries Phosphoserine. EF-hand domains are found at residues 45-80 and 81-115; these read SKLEGFKEKYMEFDLNGNGDIDIMSLKRMLEKLGVP and KTHLELKKLIGEVSSGSGETFSYPDFLRMMLGKRS. Residues aspartate 58, asparagine 60, asparagine 62, aspartate 64, threonine 100, and aspartate 105 each contribute to the Ca(2+) site. Positions 128–147 are disordered; it reads AREKEKPTGPPAKKAISELP.

In terms of assembly, homodimer (Potential). Monomer. Interacts with LCP1. Phosphorylated on serine residues.

It localises to the cytoplasm. The protein resides in the cytoskeleton. Its subcellular location is the cell projection. The protein localises to the ruffle membrane. It is found in the phagocytic cup. Actin-binding protein that enhances membrane ruffling and RAC activation. Enhances the actin-bundling activity of LCP1. Binds calcium. Plays a role in RAC signaling and in phagocytosis. May play a role in macrophage activation and function. Promotes the proliferation of vascular smooth muscle cells and of T-lymphocytes. Enhances lymphocyte migration. Plays a role in vascular inflammation. In Macaca mulatta (Rhesus macaque), this protein is Allograft inflammatory factor 1 (AIF1).